Here is a 341-residue protein sequence, read N- to C-terminus: N-acetyl-gamma-glutamyl-phosphate reductase (341 aa).

Residue Cys-149 is part of the active site.

This sequence belongs to the NAGSA dehydrogenase family. Type 1 subfamily.

It localises to the cytoplasm. It catalyses the reaction N-acetyl-L-glutamate 5-semialdehyde + phosphate + NADP(+) = N-acetyl-L-glutamyl 5-phosphate + NADPH + H(+). It participates in amino-acid biosynthesis; L-arginine biosynthesis; N(2)-acetyl-L-ornithine from L-glutamate: step 3/4. Catalyzes the NADPH-dependent reduction of N-acetyl-5-glutamyl phosphate to yield N-acetyl-L-glutamate 5-semialdehyde. In Methanocaldococcus jannaschii (strain ATCC 43067 / DSM 2661 / JAL-1 / JCM 10045 / NBRC 100440) (Methanococcus jannaschii), this protein is N-acetyl-gamma-glutamyl-phosphate reductase.